We begin with the raw amino-acid sequence, 1642 residues long: MGSKRAMDVHMFPSDLEFAVFTDQEIRKLSVVKVITGITFDALGHAIPGGLYDIRMGSYGRCMDPCGTCLKLQDCPGHMGHIELGTPVYNPFFIKFVQRLLCIFCLHCYKLQMKDHECEIIMLQLRLIDAGYIIEAQELELFKSEIVCQNTENLVAIKNGDMVHPHIAAMYKLLEKNEKNSSNSTKTSCSLRTAITHSALQRLGKKCRHCNKSMRFVRYMHRRLVFYVTLADIKERVGTGAETGGQNKVIFADECRRYLRQIYANYPELLKLLVPVLGLSNTDLTQGDRSPVDLFFMDTLPVTPPRARPLNMVGDMLKGNPQTDIYINIIENNHVLNVVLKYMKGGQEKLTEEAKAAYQTLKGETAHEKLYTAWLALQMSVDVLLDVNMSREMKSGEGLKQIIEKKSGLIRSHMMGKRVNYAARTVITPDPNINVDEIGIPDIFAKKLSYPVPVTEWNVTELRKMVMNGPDVHPGANYIQDKNGFTTYIPADNASKRESLAKLLLSNPKDGIKIVHRHVLNGDVLLLNRQPSLHKPSIMGHKARILHGEKTFRLHYSNCKAYNADFDGDEMNAHYPQSEVARAEAYNLVNVASNYLVPKDGTPLGGLIQDHVISGVKLSIRGRFFNREDYQQLVFQGLSQLKKDIKLLPPTILKPAVLWSGKQILSTIIINIIPEGYERINLDSFAKIAGKNWNVSRPRPPICGTNPEGNDLSESQVQIRNGELLVGVLDKQQYGATTYGLIHCMYELYGGDVSTLLLTAFTKVFTFFLQLEGFTLGVKDILVTDVADRKRRKIIRECRNVGNSAVAAALELEDEPPHDELVEKMEAAYVKDSKFRVLLDRKYKSLLDGYTNDINSTCLPRGLITKFPSNNLQLMVLSGAKGSMVNTMQISCLLGQIELEGKRPPLMISGKSLPSFTSFETSPKSGGFIDGRFMTGIQPQDFFFHCMAGREGLIDTAVKTSRSGYLQRCLIKHLEGLSVHYDLTVRDSDNSVVQFLYGEDGLDILKSKFFNDKFCADFLTQNATAILRPAQLQLMKDEEQLAKVQRHEKHIRSWEKKKPAKLRAAFTHFSEELREEVEVKRPNEINSKTGRRRFDEGLLKLWKKADAEDKALYRKKYARCPDPTVAVYKQDLYYGSVSERTRKLITDYAKRKPALKETIADIMRVKTIKSLAAPGEPVGLIAAQSIGEPSTQMTLNTFHFAGRGEMNVTLGIPRLREILMLASSNIKTPSMDIPIKPGQQHQAEKLRINLNSVTLANLLEYVHVSTGLTLDPERSYEYDMRFQFLPREVYKEDYGVRPKHIIKYMHQTFFKQLIRAILKVSNASRTTKIVVIDDKKDADKDDDNDLDNGDEVGRSKAKANDDDSSDDNDDDDATGVKLKQRKTDEKDYDDPDDVEELHDANDDDDEAEDEDDEEKGQDGNDNDGDDKAVERLLSNDMVKAYTYDKENHLWCQVKLNLSVRYQKPDLTSIIRELAGKSVVHQVQHIKRAIIYKGNDDDQLLKTDGINIGEMFQHNKILDLNRLYSNDIHAIARTYGIEAASQVIVKEVSNVFKVYGITVDRRHLSLIADYMTFDGTFQPLSRKGMEHSSSPLQQMSFESSLQFLKSAAGFGRADELSSPSSRLMVGLPVRNGTGAFELLTKIC.

Zn(2+) is bound by residues C66, C69, C75, and H78. The Mg(2+) site is built by D565, D567, and D569. The bridging helix stretch occupies residues 939–951; that stretch reads PQDFFFHCMAGRE. The tract at residues 1337–1428 is disordered; the sequence is DADKDDDNDL…GNDNDGDDKA (92 aa). The span at 1340–1350 shows a compositional bias: acidic residues; sequence KDDDNDLDNGD. The segment covering 1351-1361 has biased composition (basic and acidic residues); sequence EVGRSKAKAND. Composition is skewed to acidic residues over residues 1362–1373 and 1386–1424; these read DDSSDDNDDDDA and KDYD…DNDG. 2 positions are modified to phosphoserine: S1364 and S1365.

Belongs to the RNA polymerase beta' chain family. Component of the RNA polymerase I (Pol I) complex consisting of at least 13 subunits. Phosphorylated.

It is found in the nucleus. Its subcellular location is the nucleolus. The catalysed reaction is RNA(n) + a ribonucleoside 5'-triphosphate = RNA(n+1) + diphosphate. Its function is as follows. DNA-dependent RNA polymerase catalyzes the transcription of DNA into RNA using the four ribonucleoside triphosphates as substrates. Largest and catalytic core component of RNA polymerase I which synthesizes ribosomal RNA precursors. Forms the polymerase active center together with the second largest subunit. A single stranded DNA template strand of the promoter is positioned within the central active site cleft of Pol I. A bridging helix emanates from RPA1 and crosses the cleft near the catalytic site and is thought to promote translocation of Pol I by acting as a ratchet that moves the RNA-DNA hybrid through the active site by switching from straight to bent conformations at each step of nucleotide addition. The protein is DNA-directed RNA polymerase I subunit RPA1 (RpI1) of Drosophila melanogaster (Fruit fly).